A 247-amino-acid polypeptide reads, in one-letter code: Orotidine 5'-phosphate decarboxylase (247 aa).

Residues Asp-21, Lys-43, 70 to 79 (DMKFHDIPNT), Thr-129, Arg-190, Gln-199, Gly-219, and Arg-220 contribute to the substrate site. Lys-72 functions as the Proton donor in the catalytic mechanism.

It belongs to the OMP decarboxylase family. Type 1 subfamily. As to quaternary structure, homodimer.

The enzyme catalyses orotidine 5'-phosphate + H(+) = UMP + CO2. It functions in the pathway pyrimidine metabolism; UMP biosynthesis via de novo pathway; UMP from orotate: step 2/2. In terms of biological role, catalyzes the decarboxylation of orotidine 5'-monophosphate (OMP) to uridine 5'-monophosphate (UMP). The sequence is that of Orotidine 5'-phosphate decarboxylase from Chromobacterium violaceum (strain ATCC 12472 / DSM 30191 / JCM 1249 / CCUG 213 / NBRC 12614 / NCIMB 9131 / NCTC 9757 / MK).